The primary structure comprises 536 residues: E3 ubiquitin-protein ligase Godzilla (536 aa).

An N-terminal signal peptide occupies residues 1-21; the sequence is MSKRSCQILTLLGLCLVCHEA. Residues 22–174 are Extracellular-facing; it reads TLVGGHVLVY…DELPFNINTQ (153 aa). The 63-residue stretch at 89 to 151 folds into the PA domain; sequence FVALVARGEC…FVGHTTGKAL (63 aa). Asn109 and Asn132 each carry an N-linked (GlcNAc...) asparagine glycan. Residues 175–195 form a helical membrane-spanning segment; sequence LILPFSILIGMCFIIMVIYMI. Topologically, residues 196 to 536 are cytoplasmic; the sequence is YKCIREQRRL…HSASDRQFLI (341 aa). An RING-type; atypical zinc finger spans residues 235 to 277; that stretch reads CVICLEDFIEDDKLRVLPCSHPYHTHCIDPWLTENRRVCPICK. Disordered stretches follow at residues 287-334 and 350-372; these read RASR…GAAG and HGTFRRGHAGRNPFEESQSSDDE. Residues 307-334 show a composition bias toward low complexity; that stretch reads TPLLQQQQSNGRQVGQVSSASSAGGAAG.

Belongs to the Godzilla family.

The protein resides in the endosome membrane. It carries out the reaction S-ubiquitinyl-[E2 ubiquitin-conjugating enzyme]-L-cysteine + [acceptor protein]-L-lysine = [E2 ubiquitin-conjugating enzyme]-L-cysteine + N(6)-ubiquitinyl-[acceptor protein]-L-lysine.. It functions in the pathway protein modification; protein ubiquitination. Functionally, endosomal E3 ubiquitin-protein ligase that regulates the recycling endosome pathway by mediating ubiquitination of Synaptobrevin (Syb). Also acts as a regulator of transcytosis in wing imaginal disks by catalyzing ubiquitination of Syb: ubiquitination of Syb promotes transcytosis of wingless (wg) to the basolateral surface. The polypeptide is E3 ubiquitin-protein ligase Godzilla (Drosophila melanogaster (Fruit fly)).